Here is a 504-residue protein sequence, read N- to C-terminus: Bacterial leucyl aminopeptidase (504 aa).

The first 21 residues, 1 to 21 (MKYTKTLLAMVLSATFCQAYA), serve as a signal peptide directing secretion. A propeptide spanning residues 22 to 106 (EDKVWISIGA…AMPTTLASFV (85 aa)) is cleaved from the precursor. Residues His203, Asp223, Glu258, and Asp285 each contribute to the Zn(2+) site. Residues Cys329 and Cys333 are joined by a disulfide bond. Zn(2+) is bound at residue His362. Positions 406–504 (LEDGVPVTDL…SGASLKASTF (99 aa)) are cleaved as a propeptide — removed in mature form.

The protein belongs to the peptidase M28 family. M28E subfamily. Zn(2+) serves as cofactor.

The protein resides in the secreted. The catalysed reaction is Release of an N-terminal amino acid, preferentially leucine, but not glutamic or aspartic acids.. This is Bacterial leucyl aminopeptidase from Vibrio proteolyticus (Aeromonas proteolytica).